A 501-amino-acid polypeptide reads, in one-letter code: Carboxypeptidase 1 (501 aa).

The 494-residue stretch at 3 to 496 (IHTYEKEFFD…LIDYLSNKYS (494 aa)) folds into the Peptidase M32 domain. The HPF signature appears at 234-236 (HPF). Residues 244–248 (DVRVT) carry the DXRXT motif. A Zn(2+)-binding site is contributed by His265. Positions 265 to 269 (HECGH) match the HEXXH motif. Glu266 functions as the Proton donor/acceptor in the catalytic mechanism. 2 residues coordinate Zn(2+): His269 and Glu295. The short motif at 294-297 (HESQ) is the HES/GQ element. The I/NRXXA/SD motif lies at 347–352 (IRVEAD). A GXXQDXHW motif is present at residues 402–409 (GILQDVHW).

This sequence belongs to the peptidase M32 family. Homodimer. The cofactor is Zn(2+).

The catalysed reaction is Release of a C-terminal amino acid with broad specificity, except for -Pro.. Functionally, broad specificity carboxypetidase that releases amino acids sequentially from the C-terminus, including neutral, aromatic, polar and basic residues. Has lower activity with substrates ending with His or Trp. The sequence is that of Carboxypeptidase 1 (ypwA) from Bacillus subtilis (strain 168).